A 248-amino-acid polypeptide reads, in one-letter code: Aspartate/glutamate leucyltransferase (248 aa).

Belongs to the R-transferase family. Bpt subfamily.

The protein localises to the cytoplasm. It carries out the reaction N-terminal L-glutamyl-[protein] + L-leucyl-tRNA(Leu) = N-terminal L-leucyl-L-glutamyl-[protein] + tRNA(Leu) + H(+). The enzyme catalyses N-terminal L-aspartyl-[protein] + L-leucyl-tRNA(Leu) = N-terminal L-leucyl-L-aspartyl-[protein] + tRNA(Leu) + H(+). Functionally, functions in the N-end rule pathway of protein degradation where it conjugates Leu from its aminoacyl-tRNA to the N-termini of proteins containing an N-terminal aspartate or glutamate. This is Aspartate/glutamate leucyltransferase from Methylobacillus flagellatus (strain ATCC 51484 / DSM 6875 / VKM B-1610 / KT).